A 738-amino-acid chain; its full sequence is Protein ALEX (738 aa).

Disordered regions lie at residues 1–105 (MSPS…EEAM), 155–188 (REDYSPPPEESVPFQLDGEEFGGDSPPPDSASHA), 237–350 (TTFP…LPKP), 387–516 (MSGQ…LGQP), 528–578 (GEPG…LDPP), and 611–689 (GMRL…RPRI). Polar residues predominate over residues 257 to 273 (GSTTTPLSIWTAPQSQV). Residues 279 to 301 (KSREPQLRASTQRDPHLSDKQPR) show a composition bias toward basic and acidic residues. Polar residues predominate over residues 387–396 (MSGQNQTEGQ). Composition is skewed to pro residues over residues 410–438 (QPPPPPPSQPPSQPLSQPPSQPPSQPPSQ), 448–467 (PSLPPGQSPTPKRSPQPRQP), and 476–485 (PGQPPSPLRS). 3 stretches are compositionally biased toward low complexity: residues 542 to 564 (PSLPAQQLPPEQPLLPAQSLPAG), 615 to 626 (RPASARSSPPAM), and 656 to 671 (ATRSATSSPEPSEAAS).

This sequence belongs to the ALEX family. Interacts with the N-terminal region of the XLas isoforms of guanine nucleotide-binding protein G(s) subunit alpha.

The protein resides in the cell membrane. The protein localises to the cell projection. It is found in the ruffle. Functionally, may inhibit the adenylyl cyclase-stimulating activity of guanine nucleotide-binding protein G(s) subunit alpha which is produced from the same locus in a different open reading frame. In Rattus norvegicus (Rat), this protein is Protein ALEX.